The sequence spans 376 residues: Nuclear egress protein 1 (376 aa).

Ser-19 is modified (phosphoserine). The disordered stretch occupies residues 22 to 57 (RKRRQRELASKVASTVNGATSANNHGEPPSPADARP). The segment covering 33–45 (VASTVNGATSANN) has biased composition (polar residues). The CCCH-type zinc finger occupies 106 to 211 (CLDISPYGNE…HVIFENPDVH (106 aa)). Positions 316–376 (VVSTNGCGPS…PLFLNSIRAP (61 aa)) are disordered. Residues 317-332 (VSTNGCGPSSSSQSTP) show a composition bias toward polar residues.

It belongs to the herpesviridae NEC1 protein family. In terms of assembly, forms a heterohexameric complex with NEC2. Interacts with capsid vertex specific component 2/CVC2; this interaction directs the capsid to the host inner nuclear membrane to initiate budding. Phosphorylated at serine residues in the N-terminus. This phosphorylation regulates the localization within the inner nuclear membrane. Phosphorylation by viral kinase UL97 at Ser-19 plays an important role for correct viral nuclear egress complex (NEC) localization.

It is found in the host nucleus inner membrane. In terms of biological role, plays an essential role in virion nuclear egress, the first step of virion release from infected cell. Within the host nucleus, NEC1 interacts with the newly formed capsid through the vertexes and directs it to the inner nuclear membrane by associating with NEC2. Induces the budding of the capsid at the inner nuclear membrane as well as its envelopment into the perinuclear space. There, the NEC1/NEC2 complex promotes the fusion of the enveloped capsid with the outer nuclear membrane and the subsequent release of the viral capsid into the cytoplasm where it will reach the secondary budding sites in the host Golgi or trans-Golgi network. The chain is Nuclear egress protein 1 from Homo sapiens (Human).